The chain runs to 347 residues: Histidinol-phosphate aminotransferase (347 aa).

Lys-209 is subject to N6-(pyridoxal phosphate)lysine.

The protein belongs to the class-II pyridoxal-phosphate-dependent aminotransferase family. Histidinol-phosphate aminotransferase subfamily. In terms of assembly, homodimer. The cofactor is pyridoxal 5'-phosphate.

The catalysed reaction is L-histidinol phosphate + 2-oxoglutarate = 3-(imidazol-4-yl)-2-oxopropyl phosphate + L-glutamate. The protein operates within amino-acid biosynthesis; L-histidine biosynthesis; L-histidine from 5-phospho-alpha-D-ribose 1-diphosphate: step 7/9. The sequence is that of Histidinol-phosphate aminotransferase from Syntrophotalea carbinolica (strain DSM 2380 / NBRC 103641 / GraBd1) (Pelobacter carbinolicus).